A 164-amino-acid chain; its full sequence is SsrA-binding protein (164 aa).

The tract at residues 141 to 164 is disordered; that stretch reads KLHDKRQDEKQKSIKKEINSALKR. Residues 145–158 are compositionally biased toward basic and acidic residues; it reads KRQDEKQKSIKKEI.

The protein belongs to the SmpB family.

It localises to the cytoplasm. Required for rescue of stalled ribosomes mediated by trans-translation. Binds to transfer-messenger RNA (tmRNA), required for stable association of tmRNA with ribosomes. tmRNA and SmpB together mimic tRNA shape, replacing the anticodon stem-loop with SmpB. tmRNA is encoded by the ssrA gene; the 2 termini fold to resemble tRNA(Ala) and it encodes a 'tag peptide', a short internal open reading frame. During trans-translation Ala-aminoacylated tmRNA acts like a tRNA, entering the A-site of stalled ribosomes, displacing the stalled mRNA. The ribosome then switches to translate the ORF on the tmRNA; the nascent peptide is terminated with the 'tag peptide' encoded by the tmRNA and targeted for degradation. The ribosome is freed to recommence translation, which seems to be the essential function of trans-translation. The polypeptide is SsrA-binding protein (Prochlorococcus marinus (strain MIT 9301)).